Here is a 520-residue protein sequence, read N- to C-terminus: Legumin A2 (520 aa).

Positions 1-22 (MATKLLALSLSFCFLLLGGCFA) are cleaved as a signal peptide. Intrachain disulfides connect cysteine 32/cysteine 65 and cysteine 108/cysteine 342. A Cupin type-1 1 domain is found at 37–233 (LNALEPDNRI…AFNVNRHIVD (197 aa)). The segment at 250-339 (VKGGLSIISP…RRQGDNGLEE (90 aa)) is disordered. The Cupin type-1 2 domain maps to 348–497 (LNIGPSSSPD…TFNLQRNEAR (150 aa)).

It belongs to the 11S seed storage protein (globulins) family. In terms of assembly, hexamer; each subunit is composed of an acidic and a basic chain derived from a single precursor and linked by a disulfide bond.

Its function is as follows. This protein found in the seeds of many leguminous and non-leguminous plants is the source of sulfur-containing amino acids in seed meals. This Pisum sativum (Garden pea) protein is Legumin A2 (LEGA2).